Reading from the N-terminus, the 167-residue chain is Large ribosomal subunit protein uL10 (167 aa).

It belongs to the universal ribosomal protein uL10 family. As to quaternary structure, part of the ribosomal stalk of the 50S ribosomal subunit. The N-terminus interacts with L11 and the large rRNA to form the base of the stalk. The C-terminus forms an elongated spine to which L12 dimers bind in a sequential fashion forming a multimeric L10(L12)X complex.

Forms part of the ribosomal stalk, playing a central role in the interaction of the ribosome with GTP-bound translation factors. This Paraburkholderia phytofirmans (strain DSM 17436 / LMG 22146 / PsJN) (Burkholderia phytofirmans) protein is Large ribosomal subunit protein uL10.